The sequence spans 240 residues: NADPH-flavin oxidoreductase (240 aa).

Residues 11–15, Ser39, 67–69, 128–131, and 167–169 contribute to the FMN site; these read HRSIR, QAY, YIGG, and KPR.

It belongs to the flavin oxidoreductase frp family. Homodimer.

It catalyses the reaction FMNH2 + NADP(+) = FMN + NADPH + 2 H(+). Functionally, catalyzes the NADPH-dependent reduction of FMN to FMNH(2). Involved in bioluminescence by providing FMNH(2) to luciferase. This chain is NADPH-flavin oxidoreductase, found in Vibrio harveyi (Beneckea harveyi).